We begin with the raw amino-acid sequence, 234 residues long: Large ribosomal subunit protein uL1c (234 aa).

Belongs to the universal ribosomal protein uL1 family. Part of the 50S ribosomal subunit.

It is found in the plastid. Its subcellular location is the chloroplast. Its function is as follows. Binds directly to 23S rRNA. Might be involved in E site tRNA release (Potential). The chain is Large ribosomal subunit protein uL1c (rpl1) from Guillardia theta (Cryptophyte).